A 142-amino-acid polypeptide reads, in one-letter code: Hemoglobin subunit alpha-A (142 aa).

The Globin domain maps to 2–142 (VLSAADKTNV…VGAVLTAKYR (141 aa)). His59 is an O2 binding site. Residue His88 coordinates heme b.

Belongs to the globin family. In terms of assembly, heterotetramer of two alpha chains and two beta chains. Red blood cells.

Its function is as follows. Involved in oxygen transport from the lung to the various peripheral tissues. This chain is Hemoglobin subunit alpha-A (HBAA), found in Mareca penelope (Eurasian wigeon).